The chain runs to 101 residues: Small ribosomal subunit protein uS14 (101 aa).

Belongs to the universal ribosomal protein uS14 family. As to quaternary structure, part of the 30S ribosomal subunit. Contacts proteins S3 and S10.

In terms of biological role, binds 16S rRNA, required for the assembly of 30S particles and may also be responsible for determining the conformation of the 16S rRNA at the A site. The chain is Small ribosomal subunit protein uS14 from Baumannia cicadellinicola subsp. Homalodisca coagulata.